Consider the following 359-residue polypeptide: N6-succino-2-amino-2'-deoxyadenylate synthase (359 aa).

The active-site Proton acceptor is Ser-23. Residues Ser-23, Thr-24, Gly-25, Lys-26, and Gly-27 each coordinate ATP. Ser-23 contributes to the dGMP binding site. Position 23 (Ser-23) interacts with Mg(2+). Asn-49 is a dGMP binding site. The ATP site is built by Gly-51, His-52, and Thr-53. Gly-51 contributes to the Mg(2+) binding site. DGMP contacts are provided by Ser-131, Thr-132, and Arg-146. An ATP-binding site is contributed by Gln-190. Thr-205 serves as a coordination point for dGMP. Residue Thr-274 participates in Mg(2+) binding. L-aspartate-binding residues include Thr-274, Val-275, and Arg-280. Residues Asn-305 and Gln-308 each contribute to the ATP site.

This sequence belongs to the Caudovirales PurZ family. The cofactor is Mg(2+).

It catalyses the reaction dGMP + L-aspartate + ATP = (2S)-2-amino-2'-deoxyadenylo-succinate + ADP + phosphate + 2 H(+). Its pathway is purine metabolism. In terms of biological role, involved in the synthesis of the atypical nucleotide dZTP (2-amino-2'-deoxyadenosine-5'-triphosphate). Catalyzes the condensation of aspartate with deoxyguanylate into dSMP (N6-succino-2-amino-2'-deoxyadenylate), which undergoes defumarylation and phosphorylation respectively by host PurB and guanylate/nucleoside diphosphate kinases to give dZTP. dZTP is integrated into the viral genome instead of adenine by the viral DNA polymerase. This Z-base probably completely replaces adenosine and forms a triple bond to the opposite T-base. The resulting non-standard viral DNA is called Z-genome. The chemically modified DNA is probably harder for the host bacteria to digest with nucleases or restriction enzymes. This Cyanophage S-2L (Cyanobacteria phage S-2L) protein is N6-succino-2-amino-2'-deoxyadenylate synthase.